We begin with the raw amino-acid sequence, 310 residues long: p-hydroxybenzoic acid efflux pump subunit AaeA (310 aa).

A helical transmembrane segment spans residues 12–32; that stretch reads AITLVLVILAFIAIFRAWVYY.

It belongs to the membrane fusion protein (MFP) (TC 8.A.1) family.

It is found in the cell inner membrane. Forms an efflux pump with AaeB. The protein is p-hydroxybenzoic acid efflux pump subunit AaeA of Citrobacter koseri (strain ATCC BAA-895 / CDC 4225-83 / SGSC4696).